A 161-amino-acid polypeptide reads, in one-letter code: Allophycocyanin alpha chain (161 aa).

N4-methylasparagine is present on Asn71. Cys81 lines the (2R,3E)-phycocyanobilin pocket.

This sequence belongs to the phycobiliprotein family. Heterodimer of an alpha and a beta chain. Contains one covalently linked phycocyanobilin chromophore.

The protein resides in the plastid. It localises to the chloroplast thylakoid membrane. Light-harvesting photosynthetic bile pigment-protein from the phycobiliprotein complex. Allophycocyanin has a maximum absorption at approximately 650 nanometers. The chain is Allophycocyanin alpha chain (apcA) from Galdieria sulphuraria (Red alga).